Reading from the N-terminus, the 396-residue chain is Gap junction gamma-1 protein (396 aa).

Residues 1–22 are Cytoplasmic-facing; the sequence is MSWSFLTRLLEEIHNHSTFVGK. A helical membrane pass occupies residues 23 to 45; the sequence is IWLTVLIVFRIVLTAVGGESIYY. The Extracellular portion of the chain corresponds to 46–75; sequence DEQSKFVCNTEQPGCENVCYDAFAPLSHVR. Residues 76–95 traverse the membrane as a helical segment; the sequence is FWVFQIILVATPSVMYLGYA. At 96-175 the chain is on the cytoplasmic side; it reads IHKIAKMEHG…RRIREDGLMK (80 aa). A disordered region spans residues 145-165; it reads ELESDKENKEQSQPKPKHDGR. A compositionally biased stretch (basic and acidic residues) spans 147 to 156; that stretch reads ESDKENKEQS. A helical transmembrane segment spans residues 176–198; the sequence is IYVLQLLARTVFEVGFLIGQYFL. At 199–228 the chain is on the extracellular side; sequence YGFQVHPFYVCSRLPCPHKIDCFISRPTEK. The helical transmembrane segment at 229–248 threads the bilayer; it reads TIFLLIMYGVTGLCLLLNIW. At 249 to 396 the chain is on the cytoplasmic side; the sequence is EMLHLGFGTI…SGDGKTSVWI (148 aa). The interval 353–396 is disordered; it reads VQAYSHQNNPHGPREKKAKVGSKAGSNKSTASSKSGDGKTSVWI. Over residues 376–387 the composition is skewed to polar residues; it reads AGSNKSTASSKS.

The protein belongs to the connexin family. Gamma-type subfamily. As to quaternary structure, a connexon is composed of a hexamer of connexins. Interacts with CNST.

It is found in the cell membrane. Its subcellular location is the cell junction. The protein localises to the gap junction. Its function is as follows. One gap junction consists of a cluster of closely packed pairs of transmembrane channels, the connexons, through which materials of low MW diffuse from one cell to a neighboring cell. The sequence is that of Gap junction gamma-1 protein (GJC1) from Homo sapiens (Human).